Here is a 309-residue protein sequence, read N- to C-terminus: Protein FdhE homolog (309 aa).

It belongs to the FdhE family.

Its subcellular location is the cytoplasm. In terms of biological role, necessary for formate dehydrogenase activity. The polypeptide is Protein FdhE homolog (Yersinia pestis bv. Antiqua (strain Antiqua)).